Reading from the N-terminus, the 382-residue chain is Protein phosphatase 1A (382 aa).

The N-myristoyl glycine moiety is linked to residue Gly-2. Residues 23–291 enclose the PPM-type phosphatase domain; it reads RYGLSSMQGW…DNMSVILICF (269 aa). The Mn(2+) site is built by Asp-60, Gly-61, Asp-239, and Asp-282. Phosphoserine occurs at positions 375 and 377.

This sequence belongs to the PP2C family. Monomer. Interacts with SMAD2; the interaction dephosphorylates SMAD2 in its C-terminal SXS motif resulting in disruption of the SMAD2/SMAD4 complex, SMAD2 nuclear export and termination of the TGF-beta-mediated signaling. Interacts with SMAD2; the interaction dephosphorylates SMAD2 in its C-terminal SXS motif resulting in disruption of the SMAD2/SMAD4 complex, SMAD2 nuclear export and termination of the TGF-beta-mediated signaling. Interacts with the phosphorylated form of IKBKB/IKKB. Mg(2+) serves as cofactor. The cofactor is Mn(2+). In terms of processing, N-myristoylation is essential for the recognition of its substrates for dephosphorylation.

It localises to the nucleus. Its subcellular location is the cytoplasm. It is found in the cytosol. The protein resides in the membrane. The catalysed reaction is O-phospho-L-seryl-[protein] + H2O = L-seryl-[protein] + phosphate. It carries out the reaction O-phospho-L-threonyl-[protein] + H2O = L-threonyl-[protein] + phosphate. Functionally, enzyme with a broad specificity. Negatively regulates TGF-beta signaling through dephosphorylating SMAD2 and SMAD3, resulting in their dissociation from SMAD4, nuclear export of the SMADs and termination of the TGF-beta-mediated signaling. Dephosphorylates PRKAA1 and PRKAA2. Plays an important role in the termination of TNF-alpha-mediated NF-kappa-B activation through dephosphorylating and inactivating IKBKB/IKKB. The polypeptide is Protein phosphatase 1A (Ppm1a) (Mus musculus (Mouse)).